Here is a 412-residue protein sequence, read N- to C-terminus: MNYPVEHYPIDRVRADFPILQQSVNGQPLAYLDSAASAQKPLAVIDRERDFYLHEYAAVHRGIHTLSARATSAMEEVRAKVATFIHAASAEDIVFVRGTTEAINLVANSYGRTAFQPGDNLVISEMEHHANIVPWQMLAQARGLTLRVLPITDDGELDMAQLPALLDERTRLVAVTQVSNVLGTVNPLAEIIRQAHACGAKVLVDGAQAVMHQAVDVQALDCDFYAFSGHKLYGPSGIGVLYGKSELLQAMPPWEGGGAMIREVSLTQGTTYADPPWRFEAGSPHVAGIIGLGAALDYVSALGVDAIQAHEGLLMRYALASLAEVPTLRLYGPVHRQGVIAFNLGRHHAFDVGSFLDQYGIAIRTGHHCAMPLMSRYGVPSMCRASLALYSCQDEIDRLVAGLHRIHRLLGE.

K231 is subject to N6-(pyridoxal phosphate)lysine. C369 functions as the Cysteine persulfide intermediate in the catalytic mechanism.

It belongs to the class-V pyridoxal-phosphate-dependent aminotransferase family. Csd subfamily. As to quaternary structure, homodimer. Interacts with SufE and the SufBCD complex composed of SufB, SufC and SufD. The interaction with SufE is required to mediate the direct transfer of the sulfur atom from the S-sulfanylcysteine. The cofactor is pyridoxal 5'-phosphate.

The protein localises to the cytoplasm. It catalyses the reaction (sulfur carrier)-H + L-cysteine = (sulfur carrier)-SH + L-alanine. The enzyme catalyses L-selenocysteine + AH2 = hydrogenselenide + L-alanine + A + H(+). It participates in cofactor biosynthesis; iron-sulfur cluster biosynthesis. In terms of biological role, cysteine desulfurases mobilize the sulfur from L-cysteine to yield L-alanine, an essential step in sulfur metabolism for biosynthesis of a variety of sulfur-containing biomolecules. Component of the suf operon, which is activated and required under specific conditions such as oxidative stress and iron limitation. Acts as a potent selenocysteine lyase in vitro, that mobilizes selenium from L-selenocysteine. Selenocysteine lyase activity is however unsure in vivo. The protein is Cysteine desulfurase (sufS) of Dickeya dadantii (strain 3937) (Erwinia chrysanthemi (strain 3937)).